The following is a 277-amino-acid chain: Peptide deformylase 1A, chloroplastic (277 aa).

Zn(2+) is bound by residues C196 and H238. E239 is an active-site residue. H242 is a Zn(2+) binding site.

It belongs to the polypeptide deformylase family. It depends on Zn(2+) as a cofactor.

Its subcellular location is the plastid. The protein localises to the chloroplast stroma. The catalysed reaction is N-terminal N-formyl-L-methionyl-[peptide] + H2O = N-terminal L-methionyl-[peptide] + formate. Functionally, removes the formyl group from the N-terminal Met of newly synthesized proteins. The protein is Peptide deformylase 1A, chloroplastic (PDF1A) of Solanum lycopersicum (Tomato).